We begin with the raw amino-acid sequence, 381 residues long: Adaptive-response sensory kinase SasA (381 aa).

One can recognise a Histidine kinase domain in the interval 154–367 (MVAHELRTPL…CFYFTVPVWD (214 aa)). A Phosphohistidine; by autocatalysis modification is found at H157.

As to quaternary structure, homooligomerizes. Interacts with KaiC. Participates in the KaiBC complex, whose core is composed of a KaiC homohexamer and 6 KaiB.

It carries out the reaction ATP + protein L-histidine = ADP + protein N-phospho-L-histidine.. Its function is as follows. Member of the two-component regulatory system SasA/RpaA involved in genome-wide circadian gene expression. One of several clock output pathways. Participates in the Kai clock protein complex, the main circadian regulator in cyanobacteria, via its interaction with KaiC. KaiC enhances the autophosphorylation activity of SasA, which then transfers its phosphate group to RpaA to activate it. In addition to its output function, recruits fold-shifted KaiB (KaiB(fs)) to KaiC to cooperatively form the KaiB(6):KaiC(6) complex (independent of SasA kinase activity). Required for robustness of the circadian rhythm of gene expression and is involved in clock output, also required for adaptation to light/dark cycles. The protein is Adaptive-response sensory kinase SasA of Prochlorococcus marinus (strain SARG / CCMP1375 / SS120).